Here is a 1295-residue protein sequence, read N- to C-terminus: DNA-directed RNA polymerase subunit beta' (1295 aa).

Zn(2+) is bound by residues cysteine 60, cysteine 62, cysteine 75, and cysteine 78. Mg(2+)-binding residues include aspartate 516, aspartate 518, and aspartate 520. The Zn(2+) site is built by cysteine 841, cysteine 914, cysteine 921, and cysteine 924.

Belongs to the RNA polymerase beta' chain family. As to quaternary structure, the RNAP catalytic core consists of 2 alpha, 1 beta, 1 beta' and 1 omega subunit. When a sigma factor is associated with the core the holoenzyme is formed, which can initiate transcription. Mg(2+) is required as a cofactor. Zn(2+) serves as cofactor.

The enzyme catalyses RNA(n) + a ribonucleoside 5'-triphosphate = RNA(n+1) + diphosphate. DNA-dependent RNA polymerase catalyzes the transcription of DNA into RNA using the four ribonucleoside triphosphates as substrates. The polypeptide is DNA-directed RNA polymerase subunit beta' (Dehalococcoides mccartyi (strain CBDB1)).